Consider the following 910-residue polypeptide: Protein translocase subunit SecA (910 aa).

ATP is bound by residues Q89, 107–111 (GEGKT), and D502. Zn(2+) contacts are provided by C894, C896, C905, and H906.

Belongs to the SecA family. Monomer and homodimer. Part of the essential Sec protein translocation apparatus which comprises SecA, SecYEG and auxiliary proteins SecDF-YajC and YidC. Zn(2+) is required as a cofactor.

The protein localises to the cell inner membrane. It localises to the cytoplasm. The enzyme catalyses ATP + H2O + cellular proteinSide 1 = ADP + phosphate + cellular proteinSide 2.. Part of the Sec protein translocase complex. Interacts with the SecYEG preprotein conducting channel. Has a central role in coupling the hydrolysis of ATP to the transfer of proteins into and across the cell membrane, serving both as a receptor for the preprotein-SecB complex and as an ATP-driven molecular motor driving the stepwise translocation of polypeptide chains across the membrane. This Mesorhizobium japonicum (strain LMG 29417 / CECT 9101 / MAFF 303099) (Mesorhizobium loti (strain MAFF 303099)) protein is Protein translocase subunit SecA.